The following is a 245-amino-acid chain: tRNA (guanine-N(1)-)-methyltransferase (245 aa).

Residues glycine 113 and 133–138 (IGDYVL) contribute to the S-adenosyl-L-methionine site.

This sequence belongs to the RNA methyltransferase TrmD family. Homodimer.

It is found in the cytoplasm. The enzyme catalyses guanosine(37) in tRNA + S-adenosyl-L-methionine = N(1)-methylguanosine(37) in tRNA + S-adenosyl-L-homocysteine + H(+). In terms of biological role, specifically methylates guanosine-37 in various tRNAs. The protein is tRNA (guanine-N(1)-)-methyltransferase of Oceanobacillus iheyensis (strain DSM 14371 / CIP 107618 / JCM 11309 / KCTC 3954 / HTE831).